We begin with the raw amino-acid sequence, 129 residues long: Small ribosomal subunit protein uS11 (129 aa).

This sequence belongs to the universal ribosomal protein uS11 family. Part of the 30S ribosomal subunit. Interacts with proteins S7 and S18. Binds to IF-3.

Its function is as follows. Located on the platform of the 30S subunit, it bridges several disparate RNA helices of the 16S rRNA. Forms part of the Shine-Dalgarno cleft in the 70S ribosome. The chain is Small ribosomal subunit protein uS11 from Lactiplantibacillus plantarum (strain ATCC BAA-793 / NCIMB 8826 / WCFS1) (Lactobacillus plantarum).